A 194-amino-acid chain; its full sequence is Large ribosomal subunit protein uL18 (194 aa).

The protein belongs to the universal ribosomal protein uL18 family. In terms of assembly, part of the 50S ribosomal subunit. Contacts the 5S and 23S rRNAs.

Its function is as follows. This is one of the proteins that bind and probably mediate the attachment of the 5S RNA into the large ribosomal subunit, where it forms part of the central protuberance. The chain is Large ribosomal subunit protein uL18 from Methanococcus aeolicus (strain ATCC BAA-1280 / DSM 17508 / OCM 812 / Nankai-3).